A 152-amino-acid polypeptide reads, in one-letter code: Diamine acetyltransferase (152 aa).

Positions 5-152 (FEVRKATIDD…SFLDLTPKSD (148 aa)) constitute an N-acetyltransferase domain. The active-site Proton donor is the Y127.

It belongs to the acetyltransferase family. In terms of assembly, homotetramer.

It is found in the cytoplasm. It carries out the reaction an alkane-alpha,omega-diamine + acetyl-CoA = an N-acetylalkane-alpha,omega-diamine + CoA + H(+). The protein operates within amine and polyamine degradation; putrescine degradation; N-acetylputrescine from putrescine: step 1/1. In terms of biological role, enzyme which catalyzes the acetylation of polyamines. Displays higher substrate specificity for spermine than for spermidine. May function to acetylate host-derived polyamines, thus alleviating the necessity for de novo synthesis of these molecules. In Cryptosporidium parvum (strain Iowa II), this protein is Diamine acetyltransferase.